The sequence spans 469 residues: MVAHLQPPKIIETCHISPPKGTVPSTTLPLTFFDAPWLSLPLADSLFFFSYQNSTESFLQDFVPNLKHSLSITLQHFFPYAGKLIIPPRPDPPYLHYNDGQDSLVFTVAESTETDFDQLKSDSPKDISVLHGVLPKLPPPHVSPEGIQMRPIMAMQVTIFPGAGICIGNSATHVVADGVTFSHFMKYWMSLTKSSGKDPATVLLPSLPIHSCRNMIKDPGEVGAGHLERFWSQNSAKHSSHVTPENMVRATFTLSRKQIDNLKSWVTEQSENQSPVSTFVVTLAFIWVSLIKTLVQDSETKANEEDKDEVFHLMINVDCRNRLKYTQPIPQTYFGNCMAPGIVSVKKHDLLGEKCVLAASDAITARIKDMLSSDLLKTAPRWGQGVRKWVMSHYPTSIAGAPKLGLYDMDFGLGKPCKMEIVHIETGGSIAFSESRDGSNGVEIGIALEKKKMDVFDSILQQGIKKFAT.

Methionine 1 bears the N-acetylmethionine mark. Residues histidine 173 and aspartate 410 each act as proton acceptor in the active site.

This sequence belongs to the plant acyltransferase family. As to expression, highly expressed in flowers, leaves and roots. Lower levels of expression in stems and siliques.

Its function is as follows. Involved in the acylation of the 6'' position of the 3-O-glucose residue of anthocyanin. Also able to use flavonol 3-glucosides as the acyl acceptor. The polypeptide is Coumaroyl-CoA:anthocyanidin 3-O-glucoside-6''-O-coumaroyltransferase 1 (3AT1) (Arabidopsis thaliana (Mouse-ear cress)).